The sequence spans 238 residues: Ribosomal RNA small subunit methyltransferase G (238 aa).

S-adenosyl-L-methionine-binding positions include Gly77, Phe82, 128–129 (AE), and Arg147.

It belongs to the methyltransferase superfamily. RNA methyltransferase RsmG family.

It localises to the cytoplasm. Functionally, specifically methylates the N7 position of guanine in position 535 of 16S rRNA. The chain is Ribosomal RNA small subunit methyltransferase G from Listeria innocua serovar 6a (strain ATCC BAA-680 / CLIP 11262).